A 185-amino-acid polypeptide reads, in one-letter code: Elongation factor P (185 aa).

It belongs to the elongation factor P family.

The protein resides in the cytoplasm. It participates in protein biosynthesis; polypeptide chain elongation. In terms of biological role, involved in peptide bond synthesis. Stimulates efficient translation and peptide-bond synthesis on native or reconstituted 70S ribosomes in vitro. Probably functions indirectly by altering the affinity of the ribosome for aminoacyl-tRNA, thus increasing their reactivity as acceptors for peptidyl transferase. The sequence is that of Elongation factor P from Alkaliphilus metalliredigens (strain QYMF).